The chain runs to 184 residues: MASDAIISGMKTKMDKTIDLVKKDFGTIRTGRANPSLVEDIRVDYYGNQTPINQLGNISVPEPRMLVISPYDKGIMKDIEKAIQTSGLGLQPTNDGVVIRIVIPELTGERRKELAKVVKSKSEEKKVAIRNIRRDAMEDLKKHTEGMSQDEIKSVQDQIQKITDSYIDKISALTAEKEKEITTI.

It belongs to the RRF family.

It localises to the cytoplasm. In terms of biological role, responsible for the release of ribosomes from messenger RNA at the termination of protein biosynthesis. May increase the efficiency of translation by recycling ribosomes from one round of translation to another. The polypeptide is Ribosome-recycling factor (Leptospira interrogans serogroup Icterohaemorrhagiae serovar copenhageni (strain Fiocruz L1-130)).